Reading from the N-terminus, the 1178-residue chain is Tricalbin-2 (1178 aa).

A compositionally biased stretch (polar residues) spans 1–17; sequence MSPNSSKTRTDQISSMP. Residues 1-27 form a disordered region; that stretch reads MSPNSSKTRTDQISSMPGINEATKVES. At 1–98 the chain is on the cytoplasmic side; the sequence is MSPNSSKTRT…NLLPDKFYGD (98 aa). The helical transmembrane segment at 99-119 threads the bilayer; that stretch reads WYHEVAILIIAGLCSFVLGYF. K120 is a topological domain (extracellular). The chain crosses the membrane as a helical span at residues 121 to 141; sequence FSLASVLIVMLTTGMLYRTSS. The Cytoplasmic segment spans residues 142–1178; it reads KKYRESLRDL…TGDKKSEEKQ (1037 aa). Positions 164–367 constitute an SMP-LTD domain; that stretch reads DYESVEWLNT…PPFSLQLNIP (204 aa). C2 domains follow at residues 358 to 481, 504 to 628, and 632 to 749; these read PPFS…EKVH, PKKL…LKVT, and RPVD…DKYT. The stretch at 784–821 forms a coiled coil; it reads LSLEEAKEVDEINEKKDKLEKQKSTLDDKNISKEEKER. The 125-residue stretch at 962–1086 folds into the C2 4 domain; the sequence is QVSWFPVTAT…DPESDTTFNI (125 aa). The residue at position 991 (S991) is a Phosphoserine.

It belongs to the tricalbin family. Interacts with TCB1 and TCB3 via its C-terminal domain.

It localises to the cell membrane. The protein resides in the endoplasmic reticulum membrane. In terms of biological role, may play a role in membrane trafficking. This is Tricalbin-2 (TCB2) from Saccharomyces cerevisiae (strain ATCC 204508 / S288c) (Baker's yeast).